Here is a 122-residue protein sequence, read N- to C-terminus: MEPTPMLRDRDHDDAPPTYEQAMGLCPTTVSTPPPPPPDCSPPPYRPPYCLVSSPSPRHTFDMDMMEMPATMHPTTGAYFDNGWKWTFALLVVAILGIIFLAVVFTVVINRDNSTATGTSSG.

A disordered region spans residues 1-47 (MEPTPMLRDRDHDDAPPTYEQAMGLCPTTVSTPPPPPPDCSPPPYRP). 2 short sequence motifs (PPXY motif) span residues 16–19 (PPTY) and 42–45 (PPPY). The span at 32 to 47 (TPPPPPPDCSPPPYRP) shows a compositional bias: pro residues. Residues 89–109 (ALLVVAILGIIFLAVVFTVVI) traverse the membrane as a helical segment.

The protein belongs to the Cytomegalovirus UL42 protein family. In terms of assembly, interacts with host ITCH; this interaction induces the ubiquitination and subsequent degradation of ITCH. Interacts with host STING1. Interacts with CGAS.

It is found in the host membrane. The protein localises to the host cytoplasm. Plays a role in the inhibition of host innate immune response to promote latent infection. Mechanistically, suppresses viral DNA-triggered signaling by impairing DNA binding and oligomerization of CGAS. Also impairs the translocation of host STING1 from the endoplasmic reticulum to perinuclear punctate structures which is an essential step for its activation. Regulates the function of host NEDD4 family ubiquitin E3 ligases through its PPxY motif and thereby prevents the excessive ubiquitination of gB and its degradation by inhibiting these E3 ligases. The protein is Protein UL42 (UL42) of Human cytomegalovirus (strain Towne) (HHV-5).